A 470-amino-acid chain; its full sequence is Chromosomal replication initiator protein DnaA (470 aa).

The interval Met1 to Thr68 is domain I, interacts with DnaA modulators. A domain II region spans residues Thr68–Ser133. The domain III, AAA+ region stretch occupies residues Gly134–Ala350. The ATP site is built by Gly178, Gly180, Lys181, and Thr182. The domain IV, binds dsDNA stretch occupies residues Asn351–Asp470.

It belongs to the DnaA family. Oligomerizes as a right-handed, spiral filament on DNA at oriC.

The protein localises to the cytoplasm. In terms of biological role, plays an essential role in the initiation and regulation of chromosomal replication. ATP-DnaA binds to the origin of replication (oriC) to initiate formation of the DNA replication initiation complex once per cell cycle. Binds the DnaA box (a 9 base pair repeat at the origin) and separates the double-stranded (ds)DNA. Forms a right-handed helical filament on oriC DNA; dsDNA binds to the exterior of the filament while single-stranded (ss)DNA is stabiized in the filament's interior. The ATP-DnaA-oriC complex binds and stabilizes one strand of the AT-rich DNA unwinding element (DUE), permitting loading of DNA polymerase. After initiation quickly degrades to an ADP-DnaA complex that is not apt for DNA replication. Binds acidic phospholipids. In Methylobacillus flagellatus (strain ATCC 51484 / DSM 6875 / VKM B-1610 / KT), this protein is Chromosomal replication initiator protein DnaA.